The primary structure comprises 55 residues: Large ribosomal subunit protein bL33 (55 aa).

Belongs to the bacterial ribosomal protein bL33 family.

The chain is Large ribosomal subunit protein bL33 from Photorhabdus laumondii subsp. laumondii (strain DSM 15139 / CIP 105565 / TT01) (Photorhabdus luminescens subsp. laumondii).